The chain runs to 114 residues: Flagellar hook-basal body complex protein FliE (114 aa).

The protein belongs to the FliE family.

The protein localises to the bacterial flagellum basal body. The polypeptide is Flagellar hook-basal body complex protein FliE (Desulfitobacterium hafniense (strain Y51)).